A 320-amino-acid polypeptide reads, in one-letter code: Tryptophan--tRNA ligase (320 aa).

ATP-binding positions include 8-10 (QPT) and 16-17 (GN). The short motif at 9–17 (PTGRPHWGN) is the 'HIGH' region element. Position 131 (aspartate 131) interacts with L-tryptophan. Residues 143 to 145 (GVD), valine 182, and 189 to 193 (KMSKS) contribute to the ATP site. The 'KMSKS' region motif lies at 189–193 (KMSKS).

Belongs to the class-I aminoacyl-tRNA synthetase family. Homodimer.

The protein resides in the cytoplasm. The enzyme catalyses tRNA(Trp) + L-tryptophan + ATP = L-tryptophyl-tRNA(Trp) + AMP + diphosphate + H(+). Functionally, catalyzes the attachment of tryptophan to tRNA(Trp). This chain is Tryptophan--tRNA ligase, found in Rhodopirellula baltica (strain DSM 10527 / NCIMB 13988 / SH1).